A 386-amino-acid polypeptide reads, in one-letter code: 5-hydroxytryptamine receptor 1B (386 aa).

Residues M1–L42 lie on the Extracellular side of the membrane. N-linked (GlcNAc...) asparagine glycosylation is found at N24 and N28. Residues P43–A68 form a helical membrane-spanning segment. Residues T69–Y82 are Cytoplasmic-facing. Residues L83–V107 traverse the membrane as a helical segment. The Extracellular segment spans residues T108–Q115. A helical transmembrane segment spans residues V116–L141. C118 and C195 are joined by a disulfide. Residues D125 and T130 each contribute to the ergotamine site. The DRY motif; important for ligand-induced conformation changes and signaling motif lies at D142 to Y144. Topologically, residues D142–R161 are cytoplasmic. A helical membrane pass occupies residues A162 to P180. Residues F181–H201 lie on the Extracellular side of the membrane. Ergotamine is bound at residue V197. The helical transmembrane segment at V202–G225 threads the bilayer. The Cytoplasmic segment spans residues R226–T311. Positions D255–S268 are enriched in polar residues. The interval D255–G278 is disordered. Residues L312–M333 form a helical membrane-spanning segment. Over P334–H343 the chain is Extracellular. Residues M344–T366 form a helical membrane-spanning segment. An NPxxY motif; important for ligand-induced conformation changes and signaling motif is present at residues N361–Y365. Over M367–G386 the chain is Cytoplasmic. C384 is lipidated: S-palmitoyl cysteine.

The protein belongs to the G-protein coupled receptor 1 family. In terms of assembly, homodimer. Heterodimer with HTR1D. In terms of processing, phosphorylated. Desensitization of the receptor may be mediated by its phosphorylation. Post-translationally, palmitoylated. As to expression, predominantly expressed in striatum and Purkinje cells.

The protein resides in the cell membrane. In terms of biological role, G-protein coupled receptor for 5-hydroxytryptamine (serotonin). Also functions as a receptor for ergot alkaloid derivatives, various anxiolytic and antidepressant drugs and other psychoactive substances, such as lysergic acid diethylamide (LSD). Ligand binding causes a conformation change that triggers signaling via guanine nucleotide-binding proteins (G proteins) and modulates the activity of downstream effectors, such as adenylate cyclase. HTR1B is coupled to G(i)/G(o) G alpha proteins and mediates inhibitory neurotransmission by inhibiting adenylate cyclase activity. Arrestin family members inhibit signaling via G proteins and mediate activation of alternative signaling pathways. Regulates the release of 5-hydroxytryptamine, dopamine and acetylcholine in the brain, and thereby affects neural activity, nociceptive processing, pain perception, mood and behavior. Besides, plays a role in vasoconstriction of cerebral arteries. The polypeptide is 5-hydroxytryptamine receptor 1B (Htr1b) (Mus musculus (Mouse)).